A 277-amino-acid polypeptide reads, in one-letter code: Inositol monophosphatase 1 (277 aa).

Glutamate 70, aspartate 90, isoleucine 92, and aspartate 93 together coordinate Mg(2+). Position 70 (glutamate 70) interacts with substrate. A substrate-binding site is contributed by isoleucine 92 to threonine 95. Phosphothreonine is present on threonine 168. Substrate-binding positions include glycine 194–alanine 196, glutamate 213, and aspartate 220. Aspartate 220 contributes to the Mg(2+) binding site.

It belongs to the inositol monophosphatase superfamily. Homodimer. The cofactor is Mg(2+). In terms of processing, the N-terminus is blocked.

The protein resides in the cytoplasm. It carries out the reaction a myo-inositol phosphate + H2O = myo-inositol + phosphate. It catalyses the reaction 1D-myo-inositol 1-phosphate + H2O = myo-inositol + phosphate. The enzyme catalyses 1D-myo-inositol 2-phosphate + H2O = myo-inositol + phosphate. The catalysed reaction is 1D-myo-inositol 3-phosphate + H2O = myo-inositol + phosphate. It carries out the reaction 1D-myo-inositol 4-phosphate + H2O = myo-inositol + phosphate. It catalyses the reaction 1D-myo-inositol 5-phosphate + H2O = myo-inositol + phosphate. The enzyme catalyses 1D-myo-inositol 6-phosphate + H2O = myo-inositol + phosphate. The catalysed reaction is scyllo-inositol 1-phosphate + H2O = scyllo-inositol + phosphate. It carries out the reaction alpha-D-galactose 1-phosphate + H2O = D-galactose + phosphate. It catalyses the reaction alpha-D-glucose 1-phosphate + H2O = D-glucose + phosphate. The enzyme catalyses D-glucose 6-phosphate + H2O = D-glucose + phosphate. The catalysed reaction is beta-D-fructose 1-phosphate + H2O = D-fructose + phosphate. It carries out the reaction glycerol 2-phosphate + H2O = glycerol + phosphate. It catalyses the reaction adenosine 2'-phosphate + H2O = adenosine + phosphate. Its pathway is polyol metabolism; myo-inositol biosynthesis; myo-inositol from D-glucose 6-phosphate: step 2/2. Its activity is regulated as follows. Activity with myo-inositol monophosphate and D-galactose 1-phosphate is inhibited by Li(+), Ca(2+) and Mn(2+), but also by Mg(2+) at concentrations above 3 mM. In terms of biological role, phosphatase involved in the dephosphorylation of myo-inositol monophosphate to generate myo-inositol. Is also able to dephosphorylate scyllo-inositol-phosphate, myo-inositol 1,4-diphosphate, scyllo-inositol-1,3-diphosphate and scyllo-inositol-1,4-diphosphate. Also dephosphorylates in vitro other sugar-phosphates including D-galactose-1-phosphate, glucose-1-phosphate, glucose-6-phosphate, fructose-1-phosphate, beta-glycerophosphate and 2'-AMP. Responsible for the provision of inositol required for synthesis of phosphatidylinositol and polyphosphoinositides, and involved in maintaining normal brain function. Has been implicated as the pharmacological target for lithium Li(+) action in brain. Is equally active with myo-inositol monophosphate and D-galactose 1-phosphate. In Bos taurus (Bovine), this protein is Inositol monophosphatase 1 (IMPA1).